The chain runs to 120 residues: Large ribosomal subunit protein eL8 (120 aa).

The protein belongs to the eukaryotic ribosomal protein eL8 family. In terms of assembly, part of the 50S ribosomal subunit. Probably part of the RNase P complex.

It is found in the cytoplasm. Multifunctional RNA-binding protein that recognizes the K-turn motif in ribosomal RNA, the RNA component of RNase P, box H/ACA, box C/D and box C'/D' sRNAs. In Haloquadratum walsbyi (strain DSM 16790 / HBSQ001), this protein is Large ribosomal subunit protein eL8.